A 160-amino-acid polypeptide reads, in one-letter code: MSWSRVIAYGLLPGLALALTCGAGLLKWQDGAVRDAAVARAESVRAATDGTTALLSYRPDTVQHDLESARSRLTGTFLDAYTQLTHDVVIPGAQQKQISAVATVAAAASVSTSADRAVVLLFVNQTITVGKDAPTTAASSVRVTLDNINGRWLISQFEPI.

Residues Met-1–Gly-22 form the signal peptide.

The protein resides in the cell outer membrane. The sequence is that of Outer membrane protein MT2024.1 from Mycobacterium tuberculosis (strain CDC 1551 / Oshkosh).